Here is a 220-residue protein sequence, read N- to C-terminus: MGAAARSLPLAFCLLLLGTLLPRADACSCSPVHPQQAFCNADIVIRAKAVNKKEVDSGNDIYGNPIKRIQYEIKQIKMFKGPDQDIEFIYTAPAAAVCGVSLDIGGKKEYLIAGKAEGNGNMHITLCDFIVPWDTLSATQKKSLNHRYQMGCECKITRCPMIPCYISSPDECLWMDWVTEKNINGHQAKFFACIKRSDGSCAWYRGAAPPKQEFLDIEDP.

Residues 1–26 (MGAAARSLPLAFCLLLLGTLLPRADA) form the signal peptide. C27 provides a ligand contact to Zn(2+). The tract at residues 27-30 (CSCS) is involved in metalloproteinase-binding. 6 disulfides stabilise this stretch: C27/C98, C29/C127, C39/C152, C154/C201, C159/C164, and C172/C193. Residues 27-152 (CSCSPVHPQQ…SLNHRYQMGC (126 aa)) enclose the NTR domain.

Belongs to the protease inhibitor I35 (TIMP) family. In terms of assembly, interacts (via the C-terminal) with MMP2 (via the C-terminal PEX domain); the interaction inhibits the MMP2 activity. Post-translationally, the activity of TIMP2 is dependent on the presence of disulfide bonds.

The protein localises to the secreted. Its function is as follows. Complexes with metalloproteinases (such as collagenases) and irreversibly inactivates them by binding to their catalytic zinc cofactor. The sequence is that of Metalloproteinase inhibitor 2 (TIMP2) from Bos taurus (Bovine).